Consider the following 229-residue polypeptide: Prolactin (229 aa).

Residues 1 to 30 (MDNKGWSLKGSLLPLLLLVSDLLLCQGVTS) form the signal peptide. Cysteines 34 and 41 form a disulfide. Residues serine 56, serine 64, and serine 120 each carry the phosphoserine modification. Disulfide bonds link cysteine 88/cysteine 204 and cysteine 221/cysteine 229.

The protein belongs to the somatotropin/prolactin family. Interacts with PRLR.

The protein resides in the secreted. Prolactin acts primarily on the mammary gland by promoting lactation. In Neovison vison (American mink), this protein is Prolactin (PRL).